The sequence spans 569 residues: Glycylpeptide N-tetradecanoyltransferase (569 aa).

Residues 1–18 (MPPTEESKPVDPAQEKQA) are compositionally biased toward basic and acidic residues. Positions 1 to 82 (MPPTEESKPV…STESSAEVGL (82 aa)) are disordered. The span at 55 to 68 (TKKKNKKKSKKKNK) shows a compositional bias: basic residues. Residues 158–161 (YKFW), 291–293 (LCI), and 299–303 (GKRLA) contribute to the tetradecanoyl-CoA site. The active-site Proton acceptor; via carboxylate is Val569.

This sequence belongs to the NMT family. In terms of assembly, monomer.

It is found in the cytoplasm. The catalysed reaction is N-terminal glycyl-[protein] + tetradecanoyl-CoA = N-tetradecanoylglycyl-[protein] + CoA + H(+). In terms of biological role, adds a myristoyl group to the N-terminal glycine residue of certain cellular proteins. In Neurospora crassa (strain ATCC 24698 / 74-OR23-1A / CBS 708.71 / DSM 1257 / FGSC 987), this protein is Glycylpeptide N-tetradecanoyltransferase (gtt-1).